The sequence spans 421 residues: Diaminobutyrate--2-oxoglutarate transaminase (421 aa).

K267 carries the post-translational modification N6-(pyridoxal phosphate)lysine.

It belongs to the class-III pyridoxal-phosphate-dependent aminotransferase family. As to quaternary structure, homohexamer. It depends on pyridoxal 5'-phosphate as a cofactor.

It catalyses the reaction L-2,4-diaminobutanoate + 2-oxoglutarate = L-aspartate 4-semialdehyde + L-glutamate. It participates in amine and polyamine biosynthesis; ectoine biosynthesis; L-ectoine from L-aspartate 4-semialdehyde: step 1/3. Catalyzes reversively the conversion of L-aspartate beta-semialdehyde (ASA) to L-2,4-diaminobutyrate (DABA) by transamination with L-glutamate. Seems to use L-glutamate specifically as the amino group donor to ASA, as it is not active with L-alanine, L-glutamine, L-aspartate and L-lysine, and is only poorly active with L-homoserine. In the reverse reaction, gamma-aminobutyric acid (GABA) and L-ornithine can also be used as amino group donors to 2-oxoglutarate, but with a reduced activity compared to that with DABA. In Halomonas elongata (strain ATCC 33173 / DSM 2581 / NBRC 15536 / NCIMB 2198 / 1H9), this protein is Diaminobutyrate--2-oxoglutarate transaminase (ectB).